A 287-amino-acid polypeptide reads, in one-letter code: MTVTSPIVDRYAVFGHPIGHSKSPFIHGQFAALTQESLTYEAILAPIDGFEASLKSFFSSGGKGANVTVPFKEQAFALCDSLSAEAALAGAVNTLSLLADGSIRGDNTDGLGLVADLISHLGSLQHKRVLLVGAGGAARGCILPLLNAGVGQLVITNRTQTKAKDLVDIFSQLEEGIYKDKLQALSMSELTGEFELVINSTSASLAGELPPLPQSIIGSTTVCYDMMYGAMPTAFNQWALQQGAAKVIDGLGMLVGQAAKSFALWRTVEPDTAVVLKLLREKLQLDI.

Shikimate contacts are provided by residues Ser21–Ser23 and Thr68. Lys72 serves as the catalytic Proton acceptor. Positions 93 and 109 each coordinate shikimate. NADP(+) contacts are provided by residues Gly133 to Ala137, Asn157 to Lys162, and Met226. Tyr228 lines the shikimate pocket. Residue Gly250 participates in NADP(+) binding.

The protein belongs to the shikimate dehydrogenase family. Homodimer.

The enzyme catalyses shikimate + NADP(+) = 3-dehydroshikimate + NADPH + H(+). It participates in metabolic intermediate biosynthesis; chorismate biosynthesis; chorismate from D-erythrose 4-phosphate and phosphoenolpyruvate: step 4/7. Functionally, involved in the biosynthesis of the chorismate, which leads to the biosynthesis of aromatic amino acids. Catalyzes the reversible NADPH linked reduction of 3-dehydroshikimate (DHSA) to yield shikimate (SA). This chain is Shikimate dehydrogenase (NADP(+)), found in Shewanella oneidensis (strain ATCC 700550 / JCM 31522 / CIP 106686 / LMG 19005 / NCIMB 14063 / MR-1).